The following is a 294-amino-acid chain: Major pollen allergen Pha a 5.3 (294 aa).

Positions 1–25 are cleaved as a signal peptide; it reads MAVQKYTVALFLAMALVAGPAASYA.

This sequence belongs to the Poa p IX/Phl p VI allergen family.

The sequence is that of Major pollen allergen Pha a 5.3 from Phalaris aquatica (Canary grass).